We begin with the raw amino-acid sequence, 118 residues long: Holo-[acyl-carrier-protein] synthase (118 aa).

Residues Asp-8 and Glu-60 each coordinate Mg(2+).

Belongs to the P-Pant transferase superfamily. AcpS family. Mg(2+) serves as cofactor.

Its subcellular location is the cytoplasm. It carries out the reaction apo-[ACP] + CoA = holo-[ACP] + adenosine 3',5'-bisphosphate + H(+). Functionally, transfers the 4'-phosphopantetheine moiety from coenzyme A to a Ser of acyl-carrier-protein. This is Holo-[acyl-carrier-protein] synthase from Wolbachia sp. subsp. Drosophila simulans (strain wRi).